We begin with the raw amino-acid sequence, 385 residues long: Cytochrome b (385 aa).

Helical transmembrane passes span Phe-34 to Met-54, Trp-78 to Ile-99, Trp-114 to Leu-134, and Phe-179 to Leu-199. 2 residues coordinate heme b: His-84 and His-98. Residues His-183 and His-197 each contribute to the heme b site. An a ubiquinone-binding site is contributed by His-202. The next 4 membrane-spanning stretches (helical) occupy residues Phe-227–Phe-247, Leu-289–Ile-309, Phe-321–Ala-341, and Tyr-348–Pro-368.

The protein belongs to the cytochrome b family. In terms of assembly, the cytochrome bc1 complex contains 3 respiratory subunits (MT-CYB, CYC1 and UQCRFS1), 2 core proteins (UQCRC1 and UQCRC2) and probably 6 low-molecular weight proteins. Requires heme b as cofactor.

Its subcellular location is the mitochondrion inner membrane. Component of the ubiquinol-cytochrome c reductase complex (complex III or cytochrome b-c1 complex) that is part of the mitochondrial respiratory chain. The b-c1 complex mediates electron transfer from ubiquinol to cytochrome c. Contributes to the generation of a proton gradient across the mitochondrial membrane that is then used for ATP synthesis. The protein is Cytochrome b (MT-CYB) of Myxine glutinosa (Atlantic hagfish).